The primary structure comprises 160 residues: Cathelin-related peptide SC5 (160 aa).

An N-terminal signal peptide occupies residues 1–29; sequence METQRASLSLGRRSLWLLLLGLVLASASA. A propeptide spanning residues 30–131 is cleaved from the precursor; it reads QALSYREAVL…DITCAEPQSV (102 aa). Cystine bridges form between Cys-86-Cys-97 and Cys-108-Cys-125.

This sequence belongs to the cathelicidin family.

The protein localises to the secreted. Functionally, broad spectrum bactericidal agent. This is Cathelin-related peptide SC5 from Ovis aries (Sheep).